A 383-amino-acid chain; its full sequence is ATP phosphoribosyltransferase regulatory subunit (383 aa).

This sequence belongs to the class-II aminoacyl-tRNA synthetase family. HisZ subfamily. In terms of assembly, heteromultimer composed of HisG and HisZ subunits.

The protein resides in the cytoplasm. The protein operates within amino-acid biosynthesis; L-histidine biosynthesis; L-histidine from 5-phospho-alpha-D-ribose 1-diphosphate: step 1/9. In terms of biological role, required for the first step of histidine biosynthesis. May allow the feedback regulation of ATP phosphoribosyltransferase activity by histidine. This chain is ATP phosphoribosyltransferase regulatory subunit, found in Chromobacterium violaceum (strain ATCC 12472 / DSM 30191 / JCM 1249 / CCUG 213 / NBRC 12614 / NCIMB 9131 / NCTC 9757 / MK).